The chain runs to 224 residues: Ribonuclease HII (224 aa).

Positions 33-224 (FHVAGVDEVG…LKERYRNDVS (192 aa)) constitute an RNase H type-2 domain. A divalent metal cation-binding residues include aspartate 39, glutamate 40, and aspartate 131.

It belongs to the RNase HII family. Requires Mn(2+) as cofactor. It depends on Mg(2+) as a cofactor.

The protein localises to the cytoplasm. It carries out the reaction Endonucleolytic cleavage to 5'-phosphomonoester.. Its function is as follows. Endonuclease that specifically degrades the RNA of RNA-DNA hybrids. In Bartonella tribocorum (strain CIP 105476 / IBS 506), this protein is Ribonuclease HII.